A 524-amino-acid polypeptide reads, in one-letter code: Cytochrome P450 monooxygenase patH (524 aa).

The Cytoplasmic portion of the chain corresponds to 1 to 4; it reads MEPM. A helical transmembrane segment spans residues 5 to 23; that stretch reads LLLILVAAVVLLFVRWAFV. The Lumenal segment spans residues 24–524; sequence YGHRTSNMPK…KEVFSQFTEG (501 aa). Asn191 carries an N-linked (GlcNAc...) asparagine glycan. Cys442 provides a ligand contact to heme. A glycan (N-linked (GlcNAc...) asparagine) is linked at Asn499.

This sequence belongs to the cytochrome P450 family. Heme serves as cofactor.

Its subcellular location is the endoplasmic reticulum membrane. It catalyses the reaction 3-methylphenol + reduced [NADPH--hemoprotein reductase] + O2 = 3-hydroxybenzyl alcohol + oxidized [NADPH--hemoprotein reductase] + H2O + H(+). Its pathway is mycotoxin biosynthesis; patulin biosynthesis. Its function is as follows. Cytochrome P450 monooxygenase; part of the gene cluster that mediates the biosynthesis of patulin, an acetate-derived tetraketide mycotoxin produced by several fungal species that shows antimicrobial properties against several bacteria. PatH catalyzes the conversion of m-cresol into m-hydroxybenzyl alcohol. The pathway begins with the synthesis of 6-methylsalicylic acid by the polyketide synthase (PKS) patK via condensation of acetate and malonate units. The 6-methylsalicylic acid decarboxylase patG then catalyzes the decarboxylation of 6-methylsalicylic acid to yield m-cresol (also known as 3-methylphenol). These first reactions occur in the cytosol. The intermediate m-cresol is then transported into the endoplasmic reticulum where the cytochrome P450 monooxygenase patH converts it to m-hydroxybenzyl alcohol, which is further converted to gentisyl alcohol by the cytochrome P450 monooxygenase patI. The oxidoreductases patJ and patO further convert gentisyl alcohol to isoepoxydon in the vacuole. PatN catalyzes then the transformation of isoepoxydon into phyllostine. The cluster protein patF is responsible for the conversion from phyllostine to neopatulin whereas the alcohol dehydrogenase patD converts neopatulin to E-ascladiol. The steps between isoepoxydon and E-ascladiol occur in the cytosol, and E-ascladiol is probably secreted to the extracellular space by one of the cluster-specific transporters patC or patM. Finally, the secreted patulin synthase patE catalyzes the conversion of E-ascladiol to patulin. This chain is Cytochrome P450 monooxygenase patH, found in Aspergillus clavatus (strain ATCC 1007 / CBS 513.65 / DSM 816 / NCTC 3887 / NRRL 1 / QM 1276 / 107).